The sequence spans 292 residues: Pyridoxal 5'-phosphate synthase subunit PdxS (292 aa).

D22 contacts D-ribose 5-phosphate. The Schiff-base intermediate with D-ribose 5-phosphate role is filled by K79. Residue G151 participates in D-ribose 5-phosphate binding. R163 contributes to the D-glyceraldehyde 3-phosphate binding site. D-ribose 5-phosphate contacts are provided by residues G212 and 233-234; that span reads GS.

Belongs to the PdxS/SNZ family. In the presence of PdxT, forms a dodecamer of heterodimers.

It catalyses the reaction aldehydo-D-ribose 5-phosphate + D-glyceraldehyde 3-phosphate + L-glutamine = pyridoxal 5'-phosphate + L-glutamate + phosphate + 3 H2O + H(+). The protein operates within cofactor biosynthesis; pyridoxal 5'-phosphate biosynthesis. In terms of biological role, catalyzes the formation of pyridoxal 5'-phosphate from ribose 5-phosphate (RBP), glyceraldehyde 3-phosphate (G3P) and ammonia. The ammonia is provided by the PdxT subunit. Can also use ribulose 5-phosphate and dihydroxyacetone phosphate as substrates, resulting from enzyme-catalyzed isomerization of RBP and G3P, respectively. This chain is Pyridoxal 5'-phosphate synthase subunit PdxS, found in Thermoanaerobacter sp. (strain X514).